We begin with the raw amino-acid sequence, 270 residues long: Phosphatidylglycerol--prolipoprotein diacylglyceryl transferase (270 aa).

Transmembrane regions (helical) follow at residues 17–37 (LAIH…MFLG), 63–83 (ILFL…CLFY), and 95–115 (IFYI…VIAS). Arg146 is a binding site for a 1,2-diacyl-sn-glycero-3-phospho-(1'-sn-glycerol). A run of 3 helical transmembrane segments spans residues 182–202 (SQVY…WLYA), 209–229 (GEVA…AEYF), and 243–263 (MSMG…LWVW).

Belongs to the Lgt family.

It is found in the cell inner membrane. The enzyme catalyses L-cysteinyl-[prolipoprotein] + a 1,2-diacyl-sn-glycero-3-phospho-(1'-sn-glycerol) = an S-1,2-diacyl-sn-glyceryl-L-cysteinyl-[prolipoprotein] + sn-glycerol 1-phosphate + H(+). The protein operates within protein modification; lipoprotein biosynthesis (diacylglyceryl transfer). Functionally, catalyzes the transfer of the diacylglyceryl group from phosphatidylglycerol to the sulfhydryl group of the N-terminal cysteine of a prolipoprotein, the first step in the formation of mature lipoproteins. This is Phosphatidylglycerol--prolipoprotein diacylglyceryl transferase from Paracidovorax citrulli (strain AAC00-1) (Acidovorax citrulli).